We begin with the raw amino-acid sequence, 387 residues long: Acyl-CoA dehydrogenase FadE29 (387 aa).

Residues I123–T126, T132, and T158 contribute to the FAD site. Residue E241 is the Proton acceptor of the active site. V367 to E369 contacts FAD.

The protein belongs to the acyl-CoA dehydrogenase family. As to quaternary structure, heterotetramer composed of FadE28 and FadE29. The cofactor is FAD.

It catalyses the reaction 3-oxochol-4-en-22-oyl-CoA + A = 3-oxochola-4,17-dien-22-oyl-CoA + AH2. It participates in steroid metabolism; cholesterol degradation. Functionally, involved in the third cycle of side chain dehydrogenation in the beta-oxidation of cholesterol catabolism. Contributes partly to the virulence by increasing the efficiency of beta-oxidation. Catalyzes the dehydrogenation of 2'-propanoyl-CoA ester side chains of 3-oxo-4-pregnene-20-carboxyl-CoA (3-OPC-CoA) to yield 3-oxo-4,17-pregnadiene-20-carboxyl-CoA (3-OPDC-CoA). Also able to dehydrogenate steroyl-CoA such as 3-oxo-chol-4-en-24-oyl-CoA (3-OCO-CoA), 1beta-(2'-propanoyl-CoA)-3a-alpha-H- 7a-beta-methylhexahydro-4-indanone (indanone-CoA ester), hexahydroindanone and pregenenone. The protein is Acyl-CoA dehydrogenase FadE29 (fadE29) of Mycobacterium tuberculosis (strain ATCC 25618 / H37Rv).